The chain runs to 208 residues: Holliday junction resolvase RecU (208 aa).

Mg(2+) is bound by residues Thr-86, Asp-88, Glu-101, and Gln-120.

This sequence belongs to the RecU family. Mg(2+) is required as a cofactor.

Its subcellular location is the cytoplasm. It catalyses the reaction Endonucleolytic cleavage at a junction such as a reciprocal single-stranded crossover between two homologous DNA duplexes (Holliday junction).. Functionally, endonuclease that resolves Holliday junction intermediates in genetic recombination. Cleaves mobile four-strand junctions by introducing symmetrical nicks in paired strands. Promotes annealing of linear ssDNA with homologous dsDNA. Required for DNA repair, homologous recombination and chromosome segregation. In Lacticaseibacillus casei (strain BL23) (Lactobacillus casei), this protein is Holliday junction resolvase RecU.